Consider the following 404-residue polypeptide: MQTLETPQTTSKPEFDTTIHRRKTRPVKVGDITIGGGFPVVVQSMINEDTLDIEGSVSAIRRLHEMGCEIVRVTVPSMAHAKALATIKEKLAQVYQPVPLVADVHHNGLKIALEVAKHVDKVRINPGLYVFEKPSPTRSEYTQAEFEEIGEKIRQTLEPLVISLRDQGKAMRIGVNHGSLAERMLFTYGDTPEGMVESALEFIRICESLDFYNIVISLKASRVPVMLAAYRLMVKRMDELGMDYPLHLGVTEAGDGEYGRIKSTAGIGTLLAEGIGDTIRVSLTEAPEKEIPVCYSILQALGLRKTMVEYVACPSCGRTLFNLEEVLHKVREATKHLTGLDIAVMGCIVNGPGEMADADYGYVGKQAGYISLYRGREEIKKVPEDQGVEELINLIKADGRWIDP.

Cys313, Cys316, Cys347, and Glu354 together coordinate [4Fe-4S] cluster.

The protein belongs to the IspG family. Requires [4Fe-4S] cluster as cofactor.

It carries out the reaction (2E)-4-hydroxy-3-methylbut-2-enyl diphosphate + 2 oxidized [2Fe-2S]-[ferredoxin] + H2O = 2-C-methyl-D-erythritol 2,4-cyclic diphosphate + 2 reduced [2Fe-2S]-[ferredoxin] + H(+). Its pathway is isoprenoid biosynthesis; isopentenyl diphosphate biosynthesis via DXP pathway; isopentenyl diphosphate from 1-deoxy-D-xylulose 5-phosphate: step 5/6. Converts 2C-methyl-D-erythritol 2,4-cyclodiphosphate (ME-2,4cPP) into 1-hydroxy-2-methyl-2-(E)-butenyl 4-diphosphate. The chain is 4-hydroxy-3-methylbut-2-en-1-yl diphosphate synthase (ferredoxin) from Crocosphaera subtropica (strain ATCC 51142 / BH68) (Cyanothece sp. (strain ATCC 51142)).